Reading from the N-terminus, the 254-residue chain is tRNA uridine(34) hydroxylase (254 aa).

Residues Gln123–Ser217 enclose the Rhodanese domain. Cys177 (cysteine persulfide intermediate) is an active-site residue.

This sequence belongs to the TrhO family.

It catalyses the reaction uridine(34) in tRNA + AH2 + O2 = 5-hydroxyuridine(34) in tRNA + A + H2O. Functionally, catalyzes oxygen-dependent 5-hydroxyuridine (ho5U) modification at position 34 in tRNAs. This chain is tRNA uridine(34) hydroxylase, found in Legionella pneumophila (strain Paris).